Here is a 184-residue protein sequence, read N- to C-terminus: Dual specificity protein phosphatase 22 (184 aa).

Gly-2 carries N-myristoyl glycine lipidation. One can recognise a Tyrosine-protein phosphatase domain in the interval 4-144 (GMSQILPGLY…LQEFEKHEVH (141 aa)). Cys-88 acts as the Phosphocysteine intermediate in catalysis. A protein is bound by residues Leu-89, Ala-90, Val-92, Ser-93, and Arg-94.

This sequence belongs to the protein-tyrosine phosphatase family. Non-receptor class dual specificity subfamily. As to quaternary structure, monomer. Interacts with LCK; the interaction is direct. Interacts with UBR2; the interaction is direct. Post-translationally, myristoylation regulates subcellular location, and is necessary for activation of JNK.

Its subcellular location is the cytoplasm. It catalyses the reaction O-phospho-L-tyrosyl-[protein] + H2O = L-tyrosyl-[protein] + phosphate. The catalysed reaction is O-phospho-L-seryl-[protein] + H2O = L-seryl-[protein] + phosphate. It carries out the reaction O-phospho-L-threonyl-[protein] + H2O = L-threonyl-[protein] + phosphate. Functionally, dual specificity phosphatase; can dephosphorylate both phosphotyrosine and phosphoserine or phosphothreonine residues. Activates the JNK signaling pathway. Inhibits T-cell receptor signaling and T-cell mediated immune responses, acting, at least in part, by inducing degradation of E3 ubiquitin ligase UBR2. Dephosphorylates and thereby induces 'Lys-48'-linked ubiquitination of UBR2, leading to proteasomal degradation of UBR2. Dephosphorylates and thereby inactivates tyrosine kinase LCK. Inhibits UBR2-mediated 'Lys-63'-linked ubiquitination of LCK. May play a role in B-cell receptor (BCR) signaling and B-cell function. The sequence is that of Dual specificity protein phosphatase 22 (Dusp22) from Mus musculus (Mouse).